We begin with the raw amino-acid sequence, 104 residues long: Turripeptide OL55-like (104 aa).

Post-translationally, contains 8 disulfide bonds. As to expression, expressed by the venom duct.

It localises to the secreted. Functionally, acts as a neurotoxin by inhibiting an ion channel. The sequence is that of Turripeptide OL55-like from Iotyrris cingulifera (Sea snail).